The chain runs to 729 residues: DNA topoisomerase 3 (729 aa).

The 134-residue stretch at 3–136 folds into the Toprim domain; the sequence is KKAVLAEKPS…VKRLWISSVT (134 aa). Glu9 and Asp105 together coordinate Mg(2+). Residues 153-590 form the Topo IA-type catalytic domain; the sequence is YETLYAAAAA…EMKEYAKAVV (438 aa). The segment at 187–192 is interaction with DNA; that stretch reads SCGRVQ. Tyr311 serves as the catalytic O-(5'-phospho-DNA)-tyrosine intermediate. The disordered stretch occupies residues 680-708; it reads FEQRRKQNKHKNVSKREVQSYMKKQNKQD.

It belongs to the type IA topoisomerase family. Mg(2+) is required as a cofactor.

The catalysed reaction is ATP-independent breakage of single-stranded DNA, followed by passage and rejoining.. Its function is as follows. Releases the supercoiling and torsional tension of DNA, which is introduced during the DNA replication and transcription, by transiently cleaving and rejoining one strand of the DNA duplex. Introduces a single-strand break via transesterification at a target site in duplex DNA. The scissile phosphodiester is attacked by the catalytic tyrosine of the enzyme, resulting in the formation of a DNA-(5'-phosphotyrosyl)-enzyme intermediate and the expulsion of a 3'-OH DNA strand. The free DNA strand then undergoes passage around the unbroken strand, thus removing DNA supercoils. Finally, in the religation step, the DNA 3'-OH attacks the covalent intermediate to expel the active-site tyrosine and restore the DNA phosphodiester backbone. The polypeptide is DNA topoisomerase 3 (Shouchella clausii (strain KSM-K16) (Alkalihalobacillus clausii)).